A 547-amino-acid polypeptide reads, in one-letter code: MFDFGLSEDDSELGEVDEDDGPSGFEDDLFDDEGGEKNLVESPAKNSAPFESIKGEPIDQEGVVHTRESGGGDSYLSQTRFDECSLSPLTLKGVKAAGYERMTAVQEATLPIILKGKDVLAKAKTGTGKTVAFLLPAIEVVSKLPPIDCDKKRPPISVVVVCPTRELADQAAAEANKLLKFHPSIGVQLVIGGTRMALEQKRMHTNPCQILVATPGRLKDHMENTPGFATRLMGVKVLILDEADRLLDMGFRTDIERIVAALPKQRQTLLFSATVPDEVRQVCHIAMKRDLEFVNTVEEGSEETHSQVKQMHVVAPLDKQFSILYGLLTDHISENVDYKVIVFCTTAKVTSLVAELLSELKLNVREIHSRKPQSYRTRISKEFKESKGLILVSSDVSARGVDYPNVTLVVQMGVPTDREQYIHRLGRTGRRGNEGSGILLLAPWEEYFLRSIKDLPITEATLPLIDLDTKRKVEKALAHVEVKDKELAYQAWLGYYNSNKFIGRDKYQLVSLANEFSRSLGLNNPPAVPKLVLRKMGLNNIPGLRSK.

Positions 1-34 (MFDFGLSEDDSELGEVDEDDGPSGFEDDLFDDEG) are enriched in acidic residues. Residues 1–74 (MFDFGLSEDD…HTRESGGGDS (74 aa)) are disordered. The span at 53–70 (IKGEPIDQEGVVHTRESG) shows a compositional bias: basic and acidic residues. The short motif at 79 to 107 (TRFDECSLSPLTLKGVKAAGYERMTAVQE) is the Q motif element. A Helicase ATP-binding domain is found at 110–293 (LPIILKGKDV…HIAMKRDLEF (184 aa)). An ATP-binding site is contributed by 123–130 (AKTGTGKT). Residues 241–244 (DEAD) carry the DEAD box motif. The region spanning 327–478 (LLTDHISENV…TKRKVEKALA (152 aa)) is the Helicase C-terminal domain.

This sequence belongs to the DEAD box helicase family.

The catalysed reaction is ATP + H2O = ADP + phosphate + H(+). This Oryza sativa subsp. japonica (Rice) protein is DEAD-box ATP-dependent RNA helicase 31.